We begin with the raw amino-acid sequence, 662 residues long: Pro-neuregulin-1, membrane-bound isoform (662 aa).

Residues 1–13 constitute a propeptide that is removed on maturation; that stretch reads MSERKEGRGKGKG. Residues 1 to 52 form a disordered region; it reads MSERKEGRGKGKGKKKDRGSRGKPGPAEGDPSPALPPRLKEMKSQESAAGSK. The Extracellular portion of the chain corresponds to 14 to 265; the sequence is KKKDRGSRGK…SKAEELYQKR (252 aa). The region spanning 37–128 is the Ig-like C2-type domain; the sequence is PRLKEMKSQE…GNDSASANIT (92 aa). Residues Cys57 and Cys112 are joined by a disulfide bond. N-linked (GlcNAc...) asparagine glycosylation is found at Asn120, Asn126, and Asn164. The EGF-like domain maps to 178–222; that stretch reads HLIKCAEKEKTFCVNGGECFTVKDLSNPSRYLCKCPNEFTGDRCQ. Disulfide bonds link Cys182-Cys196, Cys190-Cys210, and Cys212-Cys221. A helical membrane pass occupies residues 266–288; the sequence is VLTITGICIALLVVGIMCVVAYC. Residues 289–662 lie on the Cytoplasmic side of the membrane; sequence KTKKQRQKLH…VIANQDPIAV (374 aa). Positions 358-373 are enriched in low complexity; sequence SHYTSTAHHSTTVTQT. 3 disordered regions span residues 358 to 383, 398 to 480, and 547 to 610; these read SHYT…NGHT, SVEN…PVSS, and YETT…DTPF. Residues 374–383 show a composition bias toward polar residues; the sequence is PSHSWSNGHT. Over residues 410 to 420 the composition is skewed to gly residues; it reads GPRGRLHGLGG. The span at 425-445 shows a compositional bias: basic and acidic residues; that stretch reads SFLRHARETPDSYRDSPHSER. Positions 564-574 are enriched in basic residues; the sequence is TNSRRAKRTKP. Low complexity predominate over residues 585 to 596; that stretch reads DSNTSSVSSNSE.

It belongs to the neuregulin family. The cytoplasmic domain interacts with the LIM domain region of LIMK1. Forms a ternary complex with ERBB3 and ITGAV:ITGB3 or ITGA6:ITGB4. Interacts with NRDC and BACE1. Post-translationally, proteolytic cleavage close to the plasma membrane on the external face leads to the release of the soluble growth factor form. In terms of processing, N- and O-glycosylated. Extensive glycosylation precedes the proteolytic cleavage. Widely expressed. Most tissues contain isoform alpha2A and isoform alpha2B. Isoform Alpha2 and isoform beta2 are the predominant forms in mesenchymal and non-neuronal organs. Isoform Beta1 is enriched in brain and spinal cord, but not in muscle and heart. Isoform Alpha2C is highly expressed in spinal cord, moderately in lung, brain, ovary, and stomach, in low amounts in the kidney, skin and heart and not detected in the liver, spleen, and placenta.

It localises to the cell membrane. It is found in the secreted. Direct ligand for ERBB3 and ERBB4 tyrosine kinase receptors. Concomitantly recruits ERBB1 and ERBB2 coreceptors, resulting in ligand-stimulated tyrosine phosphorylation and activation of the ERBB receptors. The multiple isoforms perform diverse functions such as inducing growth and differentiation of epithelial, glial, neuronal, and skeletal muscle cells; inducing expression of acetylcholine receptor in synaptic vesicles during the formation of the neuromuscular junction; stimulating lobuloalveolar budding and milk production in the mammary gland and inducing differentiation of mammary tumor cells; stimulating Schwann cell proliferation; implication in the development of the myocardium such as trabeculation of the developing heart. Binds to ERBB4 and ERBB3. Acts as a ligand for integrins and binds (via EGF domain) to integrins ITGAV:ITGB3 or ITGA6:ITGB4. Its binding to integrins and subsequent ternary complex formation with integrins and ERRB3 are essential for NRG1-ERBB signaling. Induces the phosphorylation and activation of MAPK3/ERK1, MAPK1/ERK2 and AKT1, and ligand-dependent ERBB4 endocytosis is essential for the NRG1-mediated activation of these kinases in neurons. This chain is Pro-neuregulin-1, membrane-bound isoform (Nrg1), found in Rattus norvegicus (Rat).